Consider the following 98-residue polypeptide: Cysteine-rich and transmembrane domain-containing protein WIH2 (98 aa).

Residues 1–77 (MSQYNQPPVG…PPQHQQQQSS (77 aa)) are disordered. Positions 9-21 (VGVPPPQGYPPEG) are enriched in pro residues. Positions 37 to 55 (YPQQGYPPQGYPQQGYPQQ) are enriched in low complexity. A compositionally biased stretch (pro residues) spans 56–70 (GYPPPYAPQYPPPPQ). Residues 75 to 92 (QSSPGFLEGCLAALCCCC) traverse the membrane as a helical segment.

It belongs to the CYSTM1 family. Expressed in floral organ primordia.

It localises to the membrane. Its function is as follows. Required for the promotion of megasporogenesis, or promotion of germ cell formation from somatic precursor cells. Acts redundantly with WIH1. Functions in a genetic pathway downstream of SPL/NZZ and WUS and together with TRN2 in promoting megasporogenesis. This is Cysteine-rich and transmembrane domain-containing protein WIH2 from Arabidopsis thaliana (Mouse-ear cress).